Here is a 204-residue protein sequence, read N- to C-terminus: Hydrophilin YNL190W (204 aa).

Residues 1 to 20 form the signal peptide; the sequence is MKFSSVTAITLATVATVATA. Residues 35–46 are compositionally biased toward low complexity; the sequence is SDGSLTTTTSTH. The interval 35–179 is disordered; the sequence is SDGSLTTTTS…ARKNNAAPGP (145 aa). Over residues 47–59 the composition is skewed to basic residues; it reads TTHKYGKFNKTSK. 11 N-linked (GlcNAc...) asparagine glycosylation sites follow: Asn55, Asn64, Asn75, Asn84, Asn95, Asn104, Asn115, Asn124, Asn135, Asn144, and Asn155. The segment covering 67–79 has biased composition (basic residues); it reads GTHKYGKFNKTSK. The span at 87–99 shows a compositional bias: basic residues; it reads GTHKYGKFNKTSK. Basic residues predominate over residues 107–119; that stretch reads GTHKYGKFNKTSK. Positions 127–139 are enriched in basic residues; sequence GTHKYGKFNKTSK. The segment covering 147 to 156 has biased composition (basic residues); sequence GTHKYGKFNK. Asn174 carries GPI-anchor amidated asparagine lipidation. Residues 175 to 204 constitute a propeptide, removed in mature form; it reads AAPGPSNFNSIKLFGVTAGSAAVAGALLLL.

This sequence belongs to the PGA14 family. Post-translationally, the GPI-anchor is attached to the protein in the endoplasmic reticulum and serves to target the protein to the cell surface. There, the glucosamine-inositol phospholipid moiety is cleaved off and the GPI-modified mannoprotein is covalently attached via its lipidless GPI glycan remnant to the 1,6-beta-glucan of the outer cell wall layer.

The protein resides in the secreted. The protein localises to the cell wall. It localises to the membrane. Its function is as follows. Hydrophilin which is essential to overcome the simple stress of the desiccation-rehydration process. The polypeptide is Hydrophilin YNL190W (Saccharomyces cerevisiae (strain ATCC 204508 / S288c) (Baker's yeast)).